The sequence spans 85 residues: Coiled-coil-helix-coiled-coil-helix domain-containing protein 7 (85 aa).

The CHCH domain maps to 13–55 (INPCLSESDASTRCMDENNYDRERCSSYFLKYKNCRRFWNSVM). Short sequence motifs (cx9C motif) lie at residues 16-26 (CLSESDASTRC) and 37-47 (CSSYFLKYKNC). 2 disulfide bridges follow: C16–C47 and C26–C37.

Belongs to the CHCHD7 family. Monomer.

The protein localises to the mitochondrion intermembrane space. This is Coiled-coil-helix-coiled-coil-helix domain-containing protein 7 (Chchd7) from Mus musculus (Mouse).